Here is a 465-residue protein sequence, read N- to C-terminus: Crh-like protein ARB_05253 (465 aa).

The N-terminal stretch at 1–21 (MKLSLAAALLGALAVSAQTST) is a signal peptide. The GH16 domain maps to 22–223 (ECNPLKQKCP…WAGGETDFSK (202 aa)). A disulfide bridge links cysteine 23 with cysteine 30. Glutamate 114 (nucleophile) is an active-site residue. Catalysis depends on glutamate 118, which acts as the Proton donor. The chitin site is built by glutamate 118, tryptophan 200, and threonine 211. 2 disordered regions span residues 261-325 (GQVN…STMT) and 339-442 (TGTG…PGST). An N-linked (GlcNAc...) asparagine glycan is attached at asparagine 264. Low complexity predominate over residues 277–287 (SSTLPSSPSTS). A compositionally biased stretch (polar residues) spans 304–325 (QAPNTGSSPSNTLTNGPSSTMT). Composition is skewed to low complexity over residues 339–348 (TGTGGVVTPT), 361–376 (TSRSSRSVSSSVSASS), and 383–397 (MTTSTGSGSAPTGTG). Residue serine 441 is the site of GPI-anchor amidated serine attachment. A propeptide spans 442-465 (TGAIHSVSNALLLSFCAIAAWALV) (removed in mature form).

This sequence belongs to the glycosyl hydrolase 16 family. CRH1 subfamily. The GPI-anchor is attached to the protein in the endoplasmic reticulum and serves to target the protein to the cell surface. There, the glucosamine-inositol phospholipid moiety is cleaved off and the GPI-modified mannoprotein is covalently attached via its lipidless GPI glycan remnant to the 1,6-beta-glucan of the outer cell wall layer.

It is found in the secreted. The protein resides in the cell wall. Its subcellular location is the membrane. The catalysed reaction is Random endo-hydrolysis of N-acetyl-beta-D-glucosaminide (1-&gt;4)-beta-linkages in chitin and chitodextrins.. Functionally, dual chitinase/transglycosylase that plays a role in cell wall architecture. Chitinase and transglycosylase activities are coupled. Required for the polysaccharide cross-linking at the septa and the cell wall. More specifically, transfers chitin to 1,6-beta-glucan in the cell wall. The sequence is that of Crh-like protein ARB_05253 from Arthroderma benhamiae (strain ATCC MYA-4681 / CBS 112371) (Trichophyton mentagrophytes).